The chain runs to 709 residues: Ral guanine nucleotide dissociation stimulator-like 3 (709 aa).

Positions Val-26–Asp-55 are disordered. An N-terminal Ras-GEF domain is found at Lys-64–Lys-201. 3 disordered regions span residues Glu-203–Ser-225, Ser-395–Pro-416, and Pro-502–Pro-604. In terms of domain architecture, Ras-GEF spans Ser-248–Pro-503. 2 stretches are compositionally biased toward low complexity: residues Pro-502 to Pro-511 and Ser-533 to Pro-551. A phosphoserine mark is found at Ser-506 and Ser-510. Residues Gly-552–Gln-576 are compositionally biased toward pro residues. Residues Ser-553, Ser-568, Ser-572, Ser-577, and Ser-600 each carry the phosphoserine modification. Residues Ser-611 to Ala-706 form an interaction with HRAS, MRAS and RIT1 region. Residues Glu-612–Gly-699 enclose the Ras-associating domain.

Interacts with GTP-bound forms of RIT1, HRAS and MRAS. As to expression, widely expressed. Expressed at high levels in the liver and kidney.

Functionally, guanine nucleotide exchange factor (GEF) for Ral-A. Potential effector of GTPase HRas and Ras-related protein M-Ras. Negatively regulates Elk-1-dependent gene induction downstream of HRas and MEKK1. This chain is Ral guanine nucleotide dissociation stimulator-like 3 (Rgl3), found in Mus musculus (Mouse).